Consider the following 320-residue polypeptide: Variant surface glycoprotein ILTAT 1.2 (320 aa).

N-linked (GlcNAc...) asparagine glycosylation is found at Asn-146, Asn-282, and Asn-295. Residues 297-320 (TKATENGVPVAQTQTGGSETTTEK) form a disordered region. Over residues 308-320 (QTQTGGSETTTEK) the composition is skewed to low complexity.

Its subcellular location is the cell membrane. In terms of biological role, VSG forms a coat on the surface of the parasite. The trypanosome evades the immune response of the host by expressing a series of antigenically distinct VSGs from an estimated 1000 VSG genes. In Trypanosoma brucei brucei, this protein is Variant surface glycoprotein ILTAT 1.2.